A 342-amino-acid polypeptide reads, in one-letter code: Tetraacyldisaccharide 4'-kinase (342 aa).

Thr-68–Thr-75 contributes to the ATP binding site.

Belongs to the LpxK family.

It catalyses the reaction a lipid A disaccharide + ATP = a lipid IVA + ADP + H(+). It participates in glycolipid biosynthesis; lipid IV(A) biosynthesis; lipid IV(A) from (3R)-3-hydroxytetradecanoyl-[acyl-carrier-protein] and UDP-N-acetyl-alpha-D-glucosamine: step 6/6. Its function is as follows. Transfers the gamma-phosphate of ATP to the 4'-position of a tetraacyldisaccharide 1-phosphate intermediate (termed DS-1-P) to form tetraacyldisaccharide 1,4'-bis-phosphate (lipid IVA). The sequence is that of Tetraacyldisaccharide 4'-kinase from Burkholderia multivorans (strain ATCC 17616 / 249).